The primary structure comprises 130 residues: Small ribosomal subunit protein uS8 (130 aa).

It belongs to the universal ribosomal protein uS8 family. As to quaternary structure, part of the 30S ribosomal subunit. Contacts proteins S5 and S12.

Its function is as follows. One of the primary rRNA binding proteins, it binds directly to 16S rRNA central domain where it helps coordinate assembly of the platform of the 30S subunit. The chain is Small ribosomal subunit protein uS8 from Histophilus somni (strain 129Pt) (Haemophilus somnus).